Consider the following 136-residue polypeptide: MFIPKKTKYKKDFKGRISGNAKGGYTLSFGSYGLKALEPCRLTSKQIESARRSISRTLKRVGKVWIRAFCHTSVSKKPMDVRMGKGKGSVEMWVCKVKPGKILFEISGVSLNLAREALNKAQAKLPMKCKFVSDEL.

Belongs to the universal ribosomal protein uL16 family. Part of the 50S ribosomal subunit.

Its function is as follows. Binds 23S rRNA and is also seen to make contacts with the A and possibly P site tRNAs. The protein is Large ribosomal subunit protein uL16 of Ehrlichia canis (strain Jake).